We begin with the raw amino-acid sequence, 596 residues long: Actin-histidine N-methyltransferase (596 aa).

Residues Arg75, 104–106 (EGY), Arg254, 275–279 (DMCNH), and 325–327 (NGF) contribute to the S-adenosyl-L-methionine site. An SET domain is found at 94–314 (DGFEISNFAD…EGEQIYIFYG (221 aa)). A disordered region spans residues 556–596 (QCKDLNGTQEDPPGGGAVVKEIEKHDPSAKRTEGEPKDAGK). Residues 575-596 (KEIEKHDPSAKRTEGEPKDAGK) are compositionally biased toward basic and acidic residues.

Belongs to the class V-like SAM-binding methyltransferase superfamily. SETD3 actin-histidine methyltransferase family.

The protein localises to the cytoplasm. The catalysed reaction is L-histidyl-[protein] + S-adenosyl-L-methionine = N(tele)-methyl-L-histidyl-[protein] + S-adenosyl-L-homocysteine + H(+). In terms of biological role, protein-histidine N-methyltransferase that specifically mediates 3-methylhistidine (tele-methylhistidine) methylation of actin at 'His-73'. Does not have protein-lysine N-methyltransferase activity and probably only catalyzes histidine methylation of actin. This chain is Actin-histidine N-methyltransferase, found in Danio rerio (Zebrafish).